A 374-amino-acid polypeptide reads, in one-letter code: Speckle-type POZ protein B (374 aa).

One can recognise an MATH domain in the interval Lys-31–Val-161. Residues Val-71–Gly-191 form a required for nuclear localization region. The region spanning Gln-173–Leu-297 is the BTB domain. A homodimerization region spans residues Leu-297–Ser-355.

Belongs to the Tdpoz family. Homodimer. Part of cullin-RING-based BCR (BTB-CUL3-RBX1) E3 ubiquitin-protein ligase complexes that contain CUL3 and SPOP, plus a target protein.

It localises to the nucleus. It is found in the nucleus speckle. Its pathway is protein modification; protein ubiquitination. Component of a cullin-RING-based BCR (BTB-CUL3-RBX1) E3 ubiquitin-protein ligase complex that mediates the ubiquitination of target proteins, leading most often to their proteasomal degradation. The polypeptide is Speckle-type POZ protein B (spop-b) (Xenopus laevis (African clawed frog)).